The sequence spans 228 residues: Cytidylate kinase (228 aa).

Residue 10–18 coordinates ATP; sequence GPSGSGKGT.

Belongs to the cytidylate kinase family. Type 1 subfamily.

The protein localises to the cytoplasm. The enzyme catalyses CMP + ATP = CDP + ADP. The catalysed reaction is dCMP + ATP = dCDP + ADP. This is Cytidylate kinase from Acinetobacter baumannii (strain AB0057).